Consider the following 513-residue polypeptide: Maturase K (513 aa).

Belongs to the intron maturase 2 family. MatK subfamily.

It is found in the plastid. The protein localises to the chloroplast. Usually encoded in the trnK tRNA gene intron. Probably assists in splicing its own and other chloroplast group II introns. The chain is Maturase K from Cynodon dactylon (Bermuda grass).